Here is a 438-residue protein sequence, read N- to C-terminus: MVLLYTPKQKTNNVQTITADILDLDYQGLGVAKINGKTWFIENALPHEKVECRILEDKRQYGHATAKKWRVKSSERLEPKCAHFMRCGGCQGQHIPIEMQRKAKQSALFKRLSKLQSEPISFQPMICGDAWAYRRRVRLSLWFNPNTKQIDMGFRQKNTNDLIPVQSCEVAEPAINYLLPKLTALLEKFSTPKQLGHIELVAADNGVAMLLRYTKNLAEIDRTLLLKFAEQEKLMLFLQSDKGIEQIYGDAPYYQFSDGIKLHFDIRDFIQVNSALNERMINTALDWLELSQQDCVLDLFCGMGNFTLPLAKRVKSAVGIEGVFEMVQKAAQNAARNQIKNIEFFQADLDQSFVEQPWANQSFNKILLDPPRSGAAFALNALCELKAEKILYVSCNPATLVRDAEILCDFGYKIEKSAVIDMFPHTGHLESITLFTTK.

In terms of domain architecture, TRAM spans 8 to 68 (KQKTNNVQTI…RQYGHATAKK (61 aa)). [4Fe-4S] cluster-binding residues include Cys81, Cys87, Cys90, and Cys168. Residues Gln271, Phe300, Asn305, Glu321, Asp348, and Asp369 each coordinate S-adenosyl-L-methionine. The active-site Nucleophile is the Cys395.

It belongs to the class I-like SAM-binding methyltransferase superfamily. RNA M5U methyltransferase family. RlmD subfamily.

It catalyses the reaction uridine(1939) in 23S rRNA + S-adenosyl-L-methionine = 5-methyluridine(1939) in 23S rRNA + S-adenosyl-L-homocysteine + H(+). Its function is as follows. Catalyzes the formation of 5-methyl-uridine at position 1939 (m5U1939) in 23S rRNA. The chain is 23S rRNA (uracil(1939)-C(5))-methyltransferase RlmD from Haemophilus influenzae (strain 86-028NP).